The chain runs to 15281 residues: Cyclosporin synthetase simA (15281 aa).

The segment at 34-463 is condensation 1; the sequence is SFAQGRLWFL…AVHVKTMPLT (430 aa). The tract at residues 513-918 is adenylation 1; sequence SYSELDHKSD…NSDQVRDAAV (406 aa). The 75-residue stretch at 1026–1100 folds into the Carrier 1 domain; sequence APRNEIEAVL…DLAATIQRGS (75 aa). Ser1060 is subject to O-(pantetheine 4'-phosphoryl)serine. The segment at 1118-1549 is condensation 2; the sequence is SFAQGRLWFL…QTPIMTMPLT (432 aa). The adenylation 2 stretch occupies residues 1599-2004; the sequence is SYAELDQRSD…SSAGVHDAVV (406 aa). The segment at 2067–2251 is methyltransferase (M) domain 1; the sequence is SWTSMYDGTL…LEELEEELLV (185 aa). Residues 2524–2598 enclose the Carrier 2 domain; the sequence is APRDSIEAII…DLAATIQQDT (75 aa). Ser2558 carries the post-translational modification O-(pantetheine 4'-phosphoryl)serine. A condensation 3 region spans residues 2616–3044; the sequence is SFAQGRLWFL…EPDMPVASMA (429 aa). The segment at 3096–3498 is adenylation 3; it reads SYADLDRKSD…SHDLVTDAAV (403 aa). Positions 3562-3749 are methyltransferase (M) domain 2; that stretch reads SMYDGSLIKK…EDELLVDPAF (188 aa). The Carrier 3 domain maps to 4011 to 4085; that stretch reads APRTEIERVL…DLVLIVQQGS (75 aa). Ser4045 carries the O-(pantetheine 4'-phosphoryl)serine modification. Positions 4100-4530 are condensation 4; that stretch reads VPQSFAQGRL…GPDVPISTLP (431 aa). Residues 4582–4986 form an adenylation 4 region; that stretch reads SYAQLDRESD…FLNDGFVEDV (405 aa). Positions 5052-5241 are methyltransferase (M) domain 3; the sequence is TSMYDGTEID…ELLVDPAFFT (190 aa). The Carrier 4 domain occupies 5503-5577; that stretch reads PPRNSVEATV…DLAAVIQRNS (75 aa). An O-(pantetheine 4'-phosphoryl)serine modification is found at Ser5537. A condensation 5 region spans residues 5592 to 6023; it reads VPQSFAQGRL…QPLTPLAVLP (432 aa). The segment at 6075–6478 is adenylation 5; it reads TYAQLDQQSD…SHNSVQDAAV (404 aa). The tract at residues 6545 to 6729 is methyltransferase (M) domain 4; that stretch reads WTSMYDGSEI…ELEANEEELL (185 aa). The Carrier 5 domain occupies 7000 to 7074; it reads APRNEIEAIL…DLAASIQRES (75 aa). Ser7034 is modified (O-(pantetheine 4'-phosphoryl)serine). Residues 7092–7517 are condensation 6; it reads SFAQGRLWFL…VLDQPLTPIS (426 aa). Residues 7572–7976 form an adenylation 6 region; the sequence is TYAQLDEQSD…DHKSVLAATV (405 aa). Residues 8060-8134 form the Carrier 6 domain; sequence PPRDEVEAVL…DLADIIRRGS (75 aa). O-(pantetheine 4'-phosphoryl)serine is present on Ser8094. Residues 8152-8582 are condensation 7; the sequence is SFAQGRLWFL…PKQRLMAMPI (431 aa). Residues 8633 to 9038 are adenylation 7; it reads TYADLDGQSN…GHDLVHDAAV (406 aa). The segment at 9111–9288 is methyltransferase (M) domain 5; it reads PVNEMKEWLD…EESEEELLVD (178 aa). Residues 9555–9629 form the Carrier 7 domain; that stretch reads APRNDTEIVL…DLAASIEQGS (75 aa). Ser9589 is subject to O-(pantetheine 4'-phosphoryl)serine. Positions 9647–10077 are condensation 8; the sequence is SYAQGRLWFL…QVSISTMPLT (431 aa). The tract at residues 10127–10529 is adenylation 8; it reads SYTSLDQKSE…GNKAIHDAAV (403 aa). The interval 10588-10768 is methyltransferase (M) domain 6; sequence RDFTSWTSMY…DQIRQEVARL (181 aa). Residues 11052-11126 enclose the Carrier 8 domain; it reads APRNDIEAVL…DLADVVQTGS (75 aa). Ser11086 bears the O-(pantetheine 4'-phosphoryl)serine mark. The segment at 11144-11567 is condensation 9; that stretch reads SFSQGRLWFL…HANLATLPLT (424 aa). The interval 11616-12019 is adenylation 9; sequence TYTELDERSS…RDPAISDSAV (404 aa). One can recognise a Carrier 9 domain in the interval 12124–12198; it reads APRNDIETII…QLAASIQQGS (75 aa). Ser12158 is modified (O-(pantetheine 4'-phosphoryl)serine). Residues 12216–12645 form a condensation 10 region; it reads SFAQGRLWFL…IAISTMPLVD (430 aa). The adenylation 10 stretch occupies residues 12696-13096; that stretch reads TYAELDQQSD…SDSSINDAVV (401 aa). Residues 13162 to 13343 form a methyltransferase (M) domain 7 region; it reads YDGSLIPREE…EDDEEELLVD (182 aa). The region spanning 13620–13694 is the Carrier 10 domain; sequence APRTEIEVVL…DLAASILQGS (75 aa). The residue at position 13654 (Ser13654) is an O-(pantetheine 4'-phosphoryl)serine. Residues 13710–14143 are condensation 11; sequence EQSFAQGRLW…PQSPIATMPL (434 aa). The adenylation 11 stretch occupies residues 14194 to 14598; it reads TYAELDRLSD…SENSVTDAAV (405 aa). The Carrier 11 domain occupies 14695 to 14769; sequence APRNETEAAI…SLAGKLEQQQ (75 aa). Ser14729 carries the O-(pantetheine 4'-phosphoryl)serine modification. The segment at 14814-15158 is condensation 12; that stretch reads DMYPATQTQI…HPEAEIEGQQ (345 aa). A disordered region spans residues 15169–15224; that stretch reads QARQANGHAPNGTNGTNGTNGTNGANGTNGTNGTNGTHANGINGSNGVNGRDSNVV. Over residues 15173–15211 the composition is skewed to low complexity; it reads ANGHAPNGTNGTNGTNGTNGANGTNGTNGTNGTHANGIN. The segment covering 15213–15224 has biased composition (polar residues); it reads SNGVNGRDSNVV.

This sequence belongs to the NRP synthetase family. The cofactor is pantetheine 4'-phosphate.

Functionally, nonribosomal peptide synthetase; part of the gene cluster that mediates the biosynthesis of the cycloundecapeptide cyclosporin A (CsA), a compound with antifungal activity used as an immunosuppressant drug. Cyclosporin A contains three non-proteinogenic amino acids: D-alanine, alpha-amino butyric acid and the unusual amino acid (4R)-4-[(E)-2-butenyl]-4-methyl-l-threonine (Bmt). The nonribosomal peptide synthetase (NRPS) catalyzes the elongation and cyclization of the undecapeptide chain. SimA contains 11 modules responsible for sequential uptake of substrates and chain elongation. In addition to the core condensation-adenylation-thiolation (C-A-T) domains present in each module, seven modules contain an additional N-methylation (M) domain (modules 2, 3, 4, 5, 7, 8, and 10). The terminal C domain (C12 or Ct) is implicated in cyclization of the peptidyl chains to form CsA. The first module (A1) takes up D-Ala which is provided by the alanine racemase simB. The A2, A3, A8, and A10 domains have the same substrate-specific signature for recognition of leucine residues. The unusual amino acid (4R)-4-[(E)-2-butenyl]-4-methyl-l-threonine (Bmt) is recognized by the fifth module (A5). The A11 domain recognizes L-Ala. The PKS simG mediates the biosynthesis of 3R-hydroxyl-4R-methyl-6E-octenoic acid from acetyl coenzyme A (acetyl-CoA), malonyl-CoA, and S-adenosylmethionine, and 3R-hydroxyl-4R-methyl-6E-octenoic acid is then be repeatedly oxidized by simI to 3R-hydroxy-4R-methyl-2-keto-6E-octenoic acid. The latter is likely converted to Bmt through the action of the aminotransferase SimJ. In Tolypocladium inflatum (Cyclosporin fungus), this protein is Cyclosporin synthetase simA.